A 720-amino-acid chain; its full sequence is DNA helicase II (720 aa).

A UvrD-like helicase ATP-binding domain is found at 8–286; the sequence is DSLNDKQREA…IRLEQNYRST (279 aa). ATP-binding positions include 32 to 37 and Arg-284; that span reads GSGKTR. Positions 287–564 constitute a UvrD-like helicase C-terminal domain; sequence SNILSAANAL…QLMTLHSAKG (278 aa).

It belongs to the helicase family. UvrD subfamily.

It carries out the reaction Couples ATP hydrolysis with the unwinding of duplex DNA by translocating in the 3'-5' direction.. The catalysed reaction is ATP + H2O = ADP + phosphate + H(+). In terms of biological role, a helicase with DNA-dependent ATPase activity. Unwinds DNA duplexes with 3'-5' polarity. Translocates on single-stranded DNA with 3'-5' polarity. Initiates unwinding more efficiently from a nicked substrate than double-stranded DNA. Involved in the post-incision events of nucleotide excision repair and methyl-directed mismatch repair, and probably also in repair of alkylated DNA. This chain is DNA helicase II, found in Escherichia coli (strain K12).